We begin with the raw amino-acid sequence, 348 residues long: MSQFVQSIIYENRTVTILDQTRLPEEEHYEIIHDLAQAIDAIKQLRVRGAPAISLFGGFVLVQEAFRTTGTLAEAKQELLEVSAQLLATRPTAVNLRNVLDELNQLIVSATTLKELPVRLEQKALELYQTDAKTSRQIGVHALELFESGDRVLTICNAGSIATAAYGTALAPFYLAKEQGIPLSVYASETRPLLQGARLTTWELQRAGIDVTLITDNMVAHTIKEKQITAIIVGADRITRNGDTANKIGTFQLALLARAFGIPFYVAAPLSTFDFTSLSGDEIEIEERDAREVTQLAGKATAPAGVPVFNPAFDVTPHDLITAIITELGVIEHPDVETIKRTIGQHTH.

Substrate contacts are provided by residues 48–50, Arg-90, and Gln-195; that span reads RGA. Catalysis depends on Asp-236, which acts as the Proton donor. 246-247 is a substrate binding site; sequence NK.

The protein belongs to the eIF-2B alpha/beta/delta subunits family. MtnA subfamily.

It catalyses the reaction 5-(methylsulfanyl)-alpha-D-ribose 1-phosphate = 5-(methylsulfanyl)-D-ribulose 1-phosphate. It participates in amino-acid biosynthesis; L-methionine biosynthesis via salvage pathway; L-methionine from S-methyl-5-thio-alpha-D-ribose 1-phosphate: step 1/6. Catalyzes the interconversion of methylthioribose-1-phosphate (MTR-1-P) into methylthioribulose-1-phosphate (MTRu-1-P). This is Methylthioribose-1-phosphate isomerase from Exiguobacterium sibiricum (strain DSM 17290 / CCUG 55495 / CIP 109462 / JCM 13490 / 255-15).